The primary structure comprises 132 residues: MHLLTTTLISFEQNKVEYLTQIAIYTQTPVCTDSNCEHARFLKHSLIQVSIERIEYLYSIFPNIWQFALLCQGQNKESLIHMEEDASTNFKLRYYVLPWSRRLQGYQSITVQNGSHVPLVKRLEKWRIFVEC.

As to quaternary structure, interacts with bqt2 and sad1. The bqt1-bqt2-sad1 complex binds rap1.

The protein localises to the cytoplasm. Its subcellular location is the cytoskeleton. It localises to the microtubule organizing center. It is found in the spindle pole body. The protein resides in the chromosome. The protein localises to the telomere. In terms of biological role, involved in chromosome segregation. During meiotic prophase, connects telomeres to the spindle pole body by forming a bridge between the telomere protein rap1 and the spindle pole body protein sad1. The polypeptide is Telomere bouquet protein 1 (bqt1) (Schizosaccharomyces pombe (strain 972 / ATCC 24843) (Fission yeast)).